Consider the following 270-residue polypeptide: Mlc titration factor A (270 aa).

His111, His148, His152, and Glu211 together coordinate Zn(2+).

Belongs to the MtfA family. As to quaternary structure, interacts with Mlc. Zn(2+) serves as cofactor.

It localises to the cytoplasm. In terms of biological role, involved in the modulation of the activity of the glucose-phosphotransferase system (glucose-PTS). Interacts with the transcriptional repressor Mlc, preventing its interaction with DNA and leading to the modulation of expression of genes regulated by Mlc, including ptsG, which encodes the PTS system glucose-specific EIICB component. Its function is as follows. Shows zinc-dependent metallopeptidase activity. This is Mlc titration factor A from Yersinia pestis bv. Antiqua (strain Nepal516).